The following is a 511-amino-acid chain: V-type proton ATPase subunit B, brain isoform (511 aa).

Arg-400 contacts ATP.

This sequence belongs to the ATPase alpha/beta chains family. In terms of assembly, V-ATPase is a heteromultimeric enzyme made up of two complexes: the ATP-hydrolytic V1 complex and the proton translocation V0 complex. The V1 complex consists of three catalytic AB heterodimers that form a heterohexamer, three peripheral stalks each consisting of EG heterodimers, one central rotor including subunits D and F, and the regulatory subunits C and H. The proton translocation complex V0 consists of the proton transport subunit a, a ring of proteolipid subunits c9c'', rotary subunit d, subunits e and f, and the accessory subunits ATP6AP1/Ac45 and ATP6AP2/PRR. Expressed in brain (at protein level). Expressed in all tissues tested, but highest in brain and in adrenal medulla.

The protein resides in the apical cell membrane. It localises to the melanosome. It is found in the cytoplasm. Its subcellular location is the cytoplasmic vesicle. The protein localises to the clathrin-coated vesicle membrane. The protein resides in the secretory vesicle. It localises to the synaptic vesicle membrane. In terms of biological role, non-catalytic subunit of the V1 complex of vacuolar(H+)-ATPase (V-ATPase), a multisubunit enzyme composed of a peripheral complex (V1) that hydrolyzes ATP and a membrane integral complex (V0) that translocates protons. V-ATPase is responsible for acidifying and maintaining the pH of intracellular compartments and in some cell types, is targeted to the plasma membrane, where it is responsible for acidifying the extracellular environment. In renal intercalated cells, can partially compensate the lack of ATP6V1B1 and mediate secretion of protons (H+) into the urine under base-line conditions but not in conditions of acid load. The sequence is that of V-type proton ATPase subunit B, brain isoform (ATP6V1B2) from Bos taurus (Bovine).